A 206-amino-acid polypeptide reads, in one-letter code: Outer-membrane lipoprotein LolB (206 aa).

The first 18 residues, 1 to 18 (MSLLKNLLAPCLALLLAG), serve as a signal peptide directing secretion. The N-palmitoyl cysteine moiety is linked to residue Cys-19. Cys-19 carries S-diacylglycerol cysteine lipidation.

Belongs to the LolB family. In terms of assembly, monomer.

The protein resides in the cell outer membrane. Functionally, plays a critical role in the incorporation of lipoproteins in the outer membrane after they are released by the LolA protein. The sequence is that of Outer-membrane lipoprotein LolB from Stutzerimonas stutzeri (strain A1501) (Pseudomonas stutzeri).